A 145-amino-acid chain; its full sequence is 3-hydroxyacyl-[acyl-carrier-protein] dehydratase FabZ (145 aa).

H47 is a catalytic residue.

It belongs to the thioester dehydratase family. FabZ subfamily.

The protein resides in the cytoplasm. It carries out the reaction a (3R)-hydroxyacyl-[ACP] = a (2E)-enoyl-[ACP] + H2O. Involved in unsaturated fatty acids biosynthesis. Catalyzes the dehydration of short chain beta-hydroxyacyl-ACPs and long chain saturated and unsaturated beta-hydroxyacyl-ACPs. This Thiobacillus denitrificans (strain ATCC 25259 / T1) protein is 3-hydroxyacyl-[acyl-carrier-protein] dehydratase FabZ.